The following is a 105-amino-acid chain: MAKIKKGDQVIVIAGKEKGKQGTVLSVSEDRVKVEGLNLVKKHQKPNRVTGAEGGIVTQEASLHISNVAILNATTQKADRVGYQVIDGVKTRVYKSTGESVAVAK.

Belongs to the universal ribosomal protein uL24 family. As to quaternary structure, part of the 50S ribosomal subunit.

Functionally, one of two assembly initiator proteins, it binds directly to the 5'-end of the 23S rRNA, where it nucleates assembly of the 50S subunit. One of the proteins that surrounds the polypeptide exit tunnel on the outside of the subunit. This is Large ribosomal subunit protein uL24 from Acinetobacter baumannii (strain AB307-0294).